Consider the following 729-residue polypeptide: MECFIMLGADARTLMRVTLLLLWLKALPSLIDLSQTGSTQYLSSPEVVIPLKVTSRARGAKNSEWLSYSLVFGGRRHVVHMRVKKLLVSTHIPVLTYTEEHTPLSDYPFVPSDCYYHGYVEGALESLVAFSACNGGLQGVLQMNGFSYEIEPIKHSSTFEHLVYTLNNNKTQFPPMLCSLTEKRLLYQPFGVEEAKKSAMKQNYGKLWPHMWFLELAVVVDYGFFTNAQQNLSKVRGDVVLVVNMVDSMYKPLDTYVTLVGIEIWNRGNVLPMENIHQVLEDFSHWKQISLSQVHHDAAHIFIRSSLISVLGIAYIAGICRPPLDCGVENFQGDAWSLFANTVAHELGHTFGMKHDEESCSCGKSGCVMSTFRVPAERFTNCSYSDFMKTTLNQGTCLYNHPRPGAGFLVKRCGNGMVESEEECDCGSVQECEQDPCCFLNCTLRPAAACSFGLCCKDCKFMLLGELCRPKINECDLPEWCNGTSHQCPEDGYVQDGVPCGAGAYCYQKQCNNHDQQCREIFGKGARSASHNCYKEINLQGNRFGHCGTDGTVFLKCRMSDVFCGKVHCENVEDIHHPQAPYVLQNIYANGITCWSTGHCLGMGVPDVGEVKDGTTCGVGKICLHKKCVSLSVLSNACLPETCNRKGVCNNKHHCHCDYGWSPPFCLHRGYGGSIDSGPTSQKRRVIITVLSITVPVLSILICLLIAGLYRIYCKIPSGPKETKASSPG.

The first 39 residues, 1–39 (MECFIMLGADARTLMRVTLLLLWLKALPSLIDLSQTGST), serve as a signal peptide directing secretion. A propeptide spanning residues 40 to 209 (QYLSSPEVVI…MKQNYGKLWP (170 aa)) is cleaved from the precursor. N-linked (GlcNAc...) asparagine glycosylation is present at Asn169. Positions 176–183 (MLCSLTEK) match the Cysteine switch motif. Residue Cys178 coordinates Zn(2+). Residues 210-685 (HMWFLELAVV…DSGPTSQKRR (476 aa)) are Extracellular-facing. One can recognise a Peptidase M12B domain in the interval 212 to 402 (WFLELAVVVD…NQGTCLYNHP (191 aa)). Asn231 carries an N-linked (GlcNAc...) asparagine glycan. Cystine bridges form between Cys320–Cys397, Cys360–Cys382, and Cys362–Cys367. His345 provides a ligand contact to Zn(2+). The active site involves Glu346. 2 residues coordinate Zn(2+): His349 and His355. N-linked (GlcNAc...) asparagine glycans are attached at residues Asn381, Asn441, and Asn482. Positions 410-496 (VKRCGNGMVE…QCPEDGYVQD (87 aa)) constitute a Disintegrin domain. Cystine bridges form between Cys468/Cys488, Cys638/Cys649, Cys643/Cys655, and Cys657/Cys666. The EGF-like domain occupies 638–667 (CLPETCNRKGVCNNKHHCHCDYGWSPPFCL). The helical transmembrane segment at 686-706 (VIITVLSITVPVLSILICLLI) threads the bilayer. Topologically, residues 707 to 729 (AGLYRIYCKIPSGPKETKASSPG) are cytoplasmic.

Zn(2+) is required as a cofactor. Post-translationally, has no obvious cleavage site for furin endopeptidase, suggesting that the proteolytic processing is regulated. Highly expressed in Leydig cells. Expressed also in cauda epididymidis, vas deferens, convoluted tubules, kidney and the parietal cells of stomach. Not detected on developing spermatocytes or mature sperm.

It is found in the membrane. In terms of biological role, may be involved in sperm maturation and/or fertilization. May also be involved in epithelia functions associated with establishing and maintaining gradients of ions or nutrients. The polypeptide is Disintegrin and metalloproteinase domain-containing protein 21 (Adam21) (Mus musculus (Mouse)).